Reading from the N-terminus, the 89-residue chain is Small ribosomal subunit protein uS15 (89 aa).

It belongs to the universal ribosomal protein uS15 family. Part of the 30S ribosomal subunit. Forms a bridge to the 50S subunit in the 70S ribosome, contacting the 23S rRNA.

Functionally, one of the primary rRNA binding proteins, it binds directly to 16S rRNA where it helps nucleate assembly of the platform of the 30S subunit by binding and bridging several RNA helices of the 16S rRNA. In terms of biological role, forms an intersubunit bridge (bridge B4) with the 23S rRNA of the 50S subunit in the ribosome. The sequence is that of Small ribosomal subunit protein uS15 from Buchnera aphidicola subsp. Baizongia pistaciae (strain Bp).